We begin with the raw amino-acid sequence, 209 residues long: dTTP/UTP pyrophosphatase (209 aa).

The Proton acceptor role is filled by Asp-79.

Belongs to the Maf family. YhdE subfamily. A divalent metal cation is required as a cofactor.

It is found in the cytoplasm. It carries out the reaction dTTP + H2O = dTMP + diphosphate + H(+). It catalyses the reaction UTP + H2O = UMP + diphosphate + H(+). Its function is as follows. Nucleoside triphosphate pyrophosphatase that hydrolyzes dTTP and UTP. May have a dual role in cell division arrest and in preventing the incorporation of modified nucleotides into cellular nucleic acids. The polypeptide is dTTP/UTP pyrophosphatase (Bradyrhizobium diazoefficiens (strain JCM 10833 / BCRC 13528 / IAM 13628 / NBRC 14792 / USDA 110)).